Here is a 222-residue protein sequence, read N- to C-terminus: N-(5'-phosphoribosyl)anthranilate isomerase (222 aa).

This sequence belongs to the TrpF family.

It catalyses the reaction N-(5-phospho-beta-D-ribosyl)anthranilate = 1-(2-carboxyphenylamino)-1-deoxy-D-ribulose 5-phosphate. The protein operates within amino-acid biosynthesis; L-tryptophan biosynthesis; L-tryptophan from chorismate: step 3/5. This Rhizobium etli (strain ATCC 51251 / DSM 11541 / JCM 21823 / NBRC 15573 / CFN 42) protein is N-(5'-phosphoribosyl)anthranilate isomerase.